We begin with the raw amino-acid sequence, 657 residues long: Probable potassium transport system protein Kup (657 aa).

Transmembrane regions (helical) follow at residues 15–35 (SFLI…LYVM), 48–68 (ITPD…TLLT), 100–120 (WLII…MLTP), 147–167 (IIII…HFGT), 173–193 (IFGP…IVNL), 219–239 (LGFF…ALYS), 251–271 (LTWP…AAWI), 292–312 (MMPS…AIIA), 348–368 (IYMP…VLYF), 378–398 (YGLS…NYLL), 403–423 (PLPI…SFLI), and 431–451 (KGGF…YIWI).

This sequence belongs to the HAK/KUP transporter (TC 2.A.72) family.

The protein localises to the cell membrane. The enzyme catalyses K(+)(in) + H(+)(in) = K(+)(out) + H(+)(out). Transport of potassium into the cell. Likely operates as a K(+):H(+) symporter. This Clostridium perfringens (strain SM101 / Type A) protein is Probable potassium transport system protein Kup.